The following is a 599-amino-acid chain: Aspartate--tRNA(Asp/Asn) ligase (599 aa).

Glutamate 183 is a binding site for L-aspartate. The aspartate stretch occupies residues glutamine 207–lysine 210. Arginine 229 serves as a coordination point for L-aspartate. ATP contacts are provided by residues arginine 229–glutamate 231 and glutamine 238. An L-aspartate-binding site is contributed by histidine 456. Glutamate 490 provides a ligand contact to ATP. Arginine 497 is an L-aspartate binding site. Glycine 542–arginine 545 is a binding site for ATP.

The protein belongs to the class-II aminoacyl-tRNA synthetase family. Type 1 subfamily. In terms of assembly, homodimer.

Its subcellular location is the cytoplasm. The catalysed reaction is tRNA(Asx) + L-aspartate + ATP = L-aspartyl-tRNA(Asx) + AMP + diphosphate. Aspartyl-tRNA synthetase with relaxed tRNA specificity since it is able to aspartylate not only its cognate tRNA(Asp) but also tRNA(Asn). Reaction proceeds in two steps: L-aspartate is first activated by ATP to form Asp-AMP and then transferred to the acceptor end of tRNA(Asp/Asn). The chain is Aspartate--tRNA(Asp/Asn) ligase from Protochlamydia amoebophila (strain UWE25).